Reading from the N-terminus, the 116-residue chain is uncharacterized protein (116 aa).

One can recognise an RRM domain in the interval 6–83; that stretch reads ATVHVGNLAP…RCIRVSPANF (78 aa).

It is found in the cytoplasm. Its subcellular location is the nucleus. This is an uncharacterized protein from Schizosaccharomyces pombe (strain 972 / ATCC 24843) (Fission yeast).